Here is a 576-residue protein sequence, read N- to C-terminus: Beta-bisabolene synthase (576 aa).

(2E,6E)-farnesyl diphosphate is bound by residues Arg-286, Asp-323, Asp-327, Arg-466, and Asn-469. Residues Asp-323 and Asp-327 each coordinate Mg(2+). The DDXXD motif signature appears at 323–327 (DDVYD). Residues Asn-469, Thr-473, and Glu-477 each coordinate Mg(2+).

The protein belongs to the terpene synthase family. Tpsb subfamily. Mg(2+) is required as a cofactor. The cofactor is Mn(2+).

In terms of biological role, produces almost exclusively beta-bisabolene and only traces of alpha-bisabolol from (2E,6E)-farnesyl diphosphate in fragrance biosynthesis. In Santalum austrocaledonicum (Sandalwood), this protein is Beta-bisabolene synthase.